The chain runs to 178 residues: Protein GrpE (178 aa).

Belongs to the GrpE family. As to quaternary structure, homodimer.

The protein localises to the cytoplasm. In terms of biological role, participates actively in the response to hyperosmotic and heat shock by preventing the aggregation of stress-denatured proteins, in association with DnaK and GrpE. It is the nucleotide exchange factor for DnaK and may function as a thermosensor. Unfolded proteins bind initially to DnaJ; upon interaction with the DnaJ-bound protein, DnaK hydrolyzes its bound ATP, resulting in the formation of a stable complex. GrpE releases ADP from DnaK; ATP binding to DnaK triggers the release of the substrate protein, thus completing the reaction cycle. Several rounds of ATP-dependent interactions between DnaJ, DnaK and GrpE are required for fully efficient folding. In Bordetella avium (strain 197N), this protein is Protein GrpE.